Consider the following 137-residue polypeptide: Large ribosomal subunit protein uL16 (137 aa).

Belongs to the universal ribosomal protein uL16 family. As to quaternary structure, part of the 50S ribosomal subunit.

Binds 23S rRNA and is also seen to make contacts with the A and possibly P site tRNAs. The polypeptide is Large ribosomal subunit protein uL16 (Pseudomonas paraeruginosa (strain DSM 24068 / PA7) (Pseudomonas aeruginosa (strain PA7))).